A 79-amino-acid chain; its full sequence is Acyl carrier protein (79 aa).

Residues 2–77 form the Carrier domain; that stretch reads STIEERVKKI…QAIDYVKVHV (76 aa). S37 carries the post-translational modification O-(pantetheine 4'-phosphoryl)serine.

It belongs to the acyl carrier protein (ACP) family. Post-translationally, 4'-phosphopantetheine is transferred from CoA to a specific serine of apo-ACP by AcpS. This modification is essential for activity because fatty acids are bound in thioester linkage to the sulfhydryl of the prosthetic group.

Its subcellular location is the cytoplasm. It participates in lipid metabolism; fatty acid biosynthesis. In terms of biological role, carrier of the growing fatty acid chain in fatty acid biosynthesis. The polypeptide is Acyl carrier protein (Xanthomonas albilineans).